Reading from the N-terminus, the 506-residue chain is Deoxyguanosinetriphosphate triphosphohydrolase (506 aa).

An HD domain is found at 66–274 (RLTHSLEVQQ…MEAADDISYC (209 aa)).

This sequence belongs to the dGTPase family. Type 1 subfamily. In terms of assembly, homotetramer. The cofactor is Mg(2+).

It catalyses the reaction dGTP + H2O = 2'-deoxyguanosine + triphosphate + H(+). Functionally, dGTPase preferentially hydrolyzes dGTP over the other canonical NTPs. The polypeptide is Deoxyguanosinetriphosphate triphosphohydrolase (Yersinia pseudotuberculosis serotype O:3 (strain YPIII)).